The primary structure comprises 343 residues: MLAALLGGAGARTGTLPGALLCLMALLQLLCSAPRGSGLAHGRRLICWQALLQCQGEPDCSYAYSQYAEACAPVLAQRGGADAPGPAGAFPASAASSPRWRCPSHCISALIQLNHTRRGPALEDCDCAQDEHCRSTKRAIEPCLPRTSSVGPGAGAGSVMGCTEARRRCDRDSRCNLALSRYLAYCGKLFNGLRCTDECRAVIEDMLAVPKAALLNDCVCDGLERPICESVKENMARLCFGPDASNGPGSSGSDGGLDDYYDEEYDDEQRAGAAGGEQPLDDDDGLARPGGGAAAAGGRGDLPHGPGRRSSSSGSGGHWANRSAWTPFACLLLLLLLLLGSHL.

A signal peptide spans 1–38; it reads MLAALLGGAGARTGTLPGALLCLMALLQLLCSAPRGSG. An N-linked (GlcNAc...) asparagine glycan is attached at asparagine 114. Positions 268–317 are disordered; that stretch reads EQRAGAAGGEQPLDDDDGLARPGGGAAAAGGRGDLPHGPGRRSSSSGSGG. The segment covering 288-300 has biased composition (gly residues); that stretch reads RPGGGAAAAGGRG. Over residues 303-313 the composition is skewed to low complexity; the sequence is PHGPGRRSSSS. The GPI-anchor amidated serine moiety is linked to residue serine 315. Positions 316–343 are cleaved as a propeptide — removed in mature form; the sequence is GGHWANRSAWTPFACLLLLLLLLLGSHL. The N-linked (GlcNAc...) asparagine glycan is linked to asparagine 321.

The protein localises to the cell membrane. Specific growth arrest protein involved in growth suppression. Blocks entry to S phase. Prevents cycling of normal and transformed cells. Binds 20(S)-hydroxycholesterol (20(S)-OHC). This chain is Growth arrest-specific protein 1 (Gas1), found in Mus musculus (Mouse).